The primary structure comprises 143 residues: Large ribosomal subunit protein uL11 (143 aa).

The protein belongs to the universal ribosomal protein uL11 family. As to quaternary structure, part of the ribosomal stalk of the 50S ribosomal subunit. Interacts with L10 and the large rRNA to form the base of the stalk. L10 forms an elongated spine to which L12 dimers bind in a sequential fashion forming a multimeric L10(L12)X complex. In terms of processing, one or more lysine residues are methylated.

Its function is as follows. Forms part of the ribosomal stalk which helps the ribosome interact with GTP-bound translation factors. The chain is Large ribosomal subunit protein uL11 from Burkholderia mallei (strain NCTC 10247).